The chain runs to 140 residues: Large ribosomal subunit protein bL17 (140 aa).

Belongs to the bacterial ribosomal protein bL17 family. In terms of assembly, part of the 50S ribosomal subunit. Contacts protein L32.

The chain is Large ribosomal subunit protein bL17 from Methylobacterium nodulans (strain LMG 21967 / CNCM I-2342 / ORS 2060).